We begin with the raw amino-acid sequence, 428 residues long: Adenylosuccinate synthetase (428 aa).

GTP is bound by residues 12–18 (GDEGKGK) and 40–42 (GHT). Catalysis depends on aspartate 13, which acts as the Proton acceptor. 2 residues coordinate Mg(2+): aspartate 13 and glycine 40. Residues 13-16 (DEGK), 38-41 (NAGH), threonine 130, arginine 144, glutamine 225, threonine 240, and arginine 304 each bind IMP. The active-site Proton donor is histidine 41. 300–306 (VTTGRAR) is a substrate binding site. GTP-binding positions include arginine 306, 332–334 (KID), and 414–416 (SVG).

It belongs to the adenylosuccinate synthetase family. Homodimer. Mg(2+) is required as a cofactor.

It is found in the cytoplasm. It catalyses the reaction IMP + L-aspartate + GTP = N(6)-(1,2-dicarboxyethyl)-AMP + GDP + phosphate + 2 H(+). It participates in purine metabolism; AMP biosynthesis via de novo pathway; AMP from IMP: step 1/2. Its function is as follows. Plays an important role in the de novo pathway of purine nucleotide biosynthesis. Catalyzes the first committed step in the biosynthesis of AMP from IMP. The sequence is that of Adenylosuccinate synthetase from Clostridium acetobutylicum (strain ATCC 824 / DSM 792 / JCM 1419 / IAM 19013 / LMG 5710 / NBRC 13948 / NRRL B-527 / VKM B-1787 / 2291 / W).